A 29-amino-acid chain; its full sequence is U1-pseudomyrmecitoxin-Pt1 subunit SS2 (29 aa).

The protein belongs to the myrmexin family. As to quaternary structure, heterodimer composed of subunit SS2 and subunit LS1 (U1-PSDTX-Pt1e), and heterodimer composed of subunit SS2 and LS2 (U1-PSDTX-Pt1c); disulfide-linked. As to expression, expressed by the venom gland.

The protein localises to the secreted. This heterodimer may have anti-inflammatory properties, since the myrmexin complex (composed of 6 SS-LS heterodimers) inhibits carrageenin-induced edema in a dose-dependent manner (after subcutaneous injection into rats). This chain is U1-pseudomyrmecitoxin-Pt1 subunit SS2, found in Pseudomyrmex triplarinus (Ant).